We begin with the raw amino-acid sequence, 214 residues long: Pyridoxine/pyridoxamine 5'-phosphate oxidase (214 aa).

Residues 8-11 and Lys-66 each bind substrate; that span reads RTNY. Residues 61 to 66, 76 to 77, Arg-82, Lys-83, and Gln-105 each bind FMN; these read RIVLIK and FT. 3 residues coordinate substrate: Tyr-123, Arg-127, and Ser-131. Residues 140–141 and Trp-184 each bind FMN; that span reads QS. Residue 190 to 192 participates in substrate binding; that stretch reads RLH. Arg-194 is an FMN binding site.

It belongs to the pyridoxamine 5'-phosphate oxidase family. Homodimer. The cofactor is FMN.

It carries out the reaction pyridoxamine 5'-phosphate + O2 + H2O = pyridoxal 5'-phosphate + H2O2 + NH4(+). The enzyme catalyses pyridoxine 5'-phosphate + O2 = pyridoxal 5'-phosphate + H2O2. It functions in the pathway cofactor metabolism; pyridoxal 5'-phosphate salvage; pyridoxal 5'-phosphate from pyridoxamine 5'-phosphate: step 1/1. Its pathway is cofactor metabolism; pyridoxal 5'-phosphate salvage; pyridoxal 5'-phosphate from pyridoxine 5'-phosphate: step 1/1. Catalyzes the oxidation of either pyridoxine 5'-phosphate (PNP) or pyridoxamine 5'-phosphate (PMP) into pyridoxal 5'-phosphate (PLP). The chain is Pyridoxine/pyridoxamine 5'-phosphate oxidase from Burkholderia pseudomallei (strain 1106a).